We begin with the raw amino-acid sequence, 253 residues long: Major prion protein (253 aa).

The first 22 residues, 1–22 (MANLGCWMLVLFVATWSDLGLC), serve as a signal peptide directing secretion. Residues 23–230 (KKRPKPGGWN…ESQAYYQRGS (208 aa)) form an interaction with GRB2, ERI3 and SYN1 region. Positions 26-108 (PKPGGWNTGG…WNKPSKPKTN (83 aa)) are disordered. Repeat copies occupy residues 51–59 (PQGGGGWGQ), 60–67 (PHGGGWGQ), 68–75 (PHGGGWGQ), 76–83 (PHGGGWGQ), and 84–91 (PHGGGWGQ). The interval 51-91 (PQGGGGWGQPHGGGWGQPHGGGWGQPHGGGWGQPHGGGWGQ) is 5 X 8 AA tandem repeats of P-H-G-G-G-W-G-Q. Over residues 52–95 (QGGGGWGQPHGGGWGQPHGGGWGQPHGGGWGQPHGGGWGQGGGT) the composition is skewed to gly residues. His-61, Gly-62, Gly-63, His-69, Gly-70, Gly-71, His-77, Gly-78, Gly-79, His-85, Gly-86, and Gly-87 together coordinate Cu(2+). Cys-179 and Cys-214 form a disulfide bridge. Residues Asn-181 and Asn-197 are each glycosylated (N-linked (GlcNAc...) asparagine). Residue Ser-230 is the site of GPI-anchor amidated serine attachment. Residues 231 to 253 (SMVLFSSPPVILLISFLIFLIVG) constitute a propeptide, removed in mature form.

This sequence belongs to the prion family. Monomer and homodimer. Has a tendency to aggregate into amyloid fibrils containing a cross-beta spine, formed by a steric zipper of superposed beta-strands. Soluble oligomers may represent an intermediate stage on the path to fibril formation. Copper binding may promote oligomerization. Interacts with GRB2, APP, ERI3/PRNPIP and SYN1. Mislocalized cytosolically exposed PrP interacts with MGRN1; this interaction alters MGRN1 subcellular location and causes lysosomal enlargement. Interacts with KIAA1191.

The protein resides in the cell membrane. It localises to the golgi apparatus. Its function is as follows. Its primary physiological function is unclear. Has cytoprotective activity against internal or environmental stresses. May play a role in neuronal development and synaptic plasticity. May be required for neuronal myelin sheath maintenance. May play a role in iron uptake and iron homeostasis. Soluble oligomers are toxic to cultured neuroblastoma cells and induce apoptosis (in vitro). Association with GPC1 (via its heparan sulfate chains) targets PRNP to lipid rafts. Also provides Cu(2+) or Zn(2+) for the ascorbate-mediated GPC1 deaminase degradation of its heparan sulfate side chains. In Hylobates lar (Lar gibbon), this protein is Major prion protein (PRNP).